Reading from the N-terminus, the 366-residue chain is Protein sigma-NS (366 aa).

The important for ssRNA-binding and formation of complexes stretch occupies residues 1–11 (MASSLRAAISK).

This sequence belongs to the orthoreovirus sigma-NS protein family. In terms of assembly, homooligomer; in presence of RNA. Interacts with protein mu-NS; this interaction allows the localization of sigma-NS to the viral factories. Interacts with host G3BP1 (via C-terminus); this interaction induces the relocalization of G3BP1 and other SG proteins to the viral factories periphery.

The protein localises to the host cytoplasm. Functionally, protein that binds to ssRNA and participates with protein mu-NS in forming the matrix of viral factories, which are large inclusions in the host cytoplasm where replication intermediates are assembled and viral RNA replication takes place. Plays a role in the inhibition of the integrated stress response (ISR) to escape from host cell translational shutoff. Participates in the disruption of stress granules (SG) through its association with host G3BP1 and mu-NS. In Mammalia (T1L), this protein is Protein sigma-NS (S3).